A 327-amino-acid polypeptide reads, in one-letter code: tRNA dimethylallyltransferase (327 aa).

An ATP-binding site is contributed by 14 to 21; sequence GPTASGKT. 16-21 is a substrate binding site; it reads TASGKT. Interaction with substrate tRNA stretches follow at residues 39-42 and 163-167; these read DSAL and QRIQR.

It belongs to the IPP transferase family. Monomer. Mg(2+) is required as a cofactor.

The catalysed reaction is adenosine(37) in tRNA + dimethylallyl diphosphate = N(6)-dimethylallyladenosine(37) in tRNA + diphosphate. In terms of biological role, catalyzes the transfer of a dimethylallyl group onto the adenine at position 37 in tRNAs that read codons beginning with uridine, leading to the formation of N6-(dimethylallyl)adenosine (i(6)A). The sequence is that of tRNA dimethylallyltransferase from Xanthomonas oryzae pv. oryzae (strain KACC10331 / KXO85).